Reading from the N-terminus, the 637-residue chain is Chaperone protein HtpG (637 aa).

Positions 1–345 (MSQQETHGFQ…SNDLPLNVSR (345 aa)) are a; substrate-binding. The segment at 346–562 (EILQDNHITK…EGEMSTQMIK (217 aa)) is b. Residues 563 to 637 (LMQAAGQPVP…MNQMLLANMK (75 aa)) form a c region.

Belongs to the heat shock protein 90 family. Homodimer.

It is found in the cytoplasm. In terms of biological role, molecular chaperone. Has ATPase activity. This is Chaperone protein HtpG from Shewanella putrefaciens (strain CN-32 / ATCC BAA-453).